A 290-amino-acid chain; its full sequence is Protein MGF 110-9L (290 aa).

Transmembrane regions (helical) follow at residues 1-19, 128-148, and 163-183; these read MKVI…VIQS, TENI…IGYI, and LLIF…IIMN. 2 N-linked (GlcNAc...) asparagine; by host glycosylation sites follow: N242 and N267.

The protein belongs to the asfivirus MGF 110 family.

Its subcellular location is the host membrane. Functionally, plays a role in virus cell tropism, and may be required for efficient virus replication in macrophages. This chain is Protein MGF 110-9L, found in Ornithodoros (relapsing fever ticks).